Here is a 130-residue protein sequence, read N- to C-terminus: Transcription antitermination protein NusB (130 aa).

It belongs to the NusB family.

In terms of biological role, involved in transcription antitermination. Required for transcription of ribosomal RNA (rRNA) genes. Binds specifically to the boxA antiterminator sequence of the ribosomal RNA (rrn) operons. This chain is Transcription antitermination protein NusB, found in Bacillus cereus (strain ATCC 10987 / NRS 248).